We begin with the raw amino-acid sequence, 634 residues long: DNA-directed RNA polymerase subunit gamma (634 aa).

The Zn(2+) site is built by Cys74, Cys76, Cys89, and Cys92. 3 residues coordinate Mg(2+): Asp471, Asp473, and Asp475.

Belongs to the RNA polymerase beta' chain family. RpoC1 subfamily. In terms of assembly, in cyanobacteria the RNAP catalytic core is composed of 2 alpha, 1 beta, 1 beta', 1 gamma and 1 omega subunit. When a sigma factor is associated with the core the holoenzyme is formed, which can initiate transcription. Requires Mg(2+) as cofactor. Zn(2+) is required as a cofactor.

The enzyme catalyses RNA(n) + a ribonucleoside 5'-triphosphate = RNA(n+1) + diphosphate. Functionally, DNA-dependent RNA polymerase catalyzes the transcription of DNA into RNA using the four ribonucleoside triphosphates as substrates. In Synechococcus sp. (strain CC9605), this protein is DNA-directed RNA polymerase subunit gamma.